Reading from the N-terminus, the 302-residue chain is MTTSEYGSRRSDDDQWDIVSGVGYTALLVAGWRALDTVGPQPLAPDEYAKYFIAASGDAYLNDQLAHPPTSVDETAFPRLYGVQTRFFDDFFRSAAAGTKQAVIVAAGLDSRAYRLEWPSGTTVFEIDLAQVLEFKARVLQRHGVEPKARRNAVAADLRTDWPATLHAAGFEPGQPSAWSVEGLLPYLTADAQDALFARIDDLCAPGSRIATGALGSRLDHDQLVALEQTHPGVNLFGDVNFSALTYDDKTNPAQWLAARGWVVEPVRNTLELEAGYGMTPPAVDVRLDAIMHSEYIVATKP.

S-adenosyl-L-methionine contacts are provided by residues Asp128 and 157-158 (DL).

Belongs to the UPF0677 family.

Functionally, exhibits S-adenosyl-L-methionine-dependent methyltransferase activity. In Mycobacterium ulcerans (strain Agy99), this protein is Putative S-adenosyl-L-methionine-dependent methyltransferase MUL_2961.